A 293-amino-acid polypeptide reads, in one-letter code: Extracellular metalloprotease MGYG_00389 (293 aa).

An N-terminal signal peptide occupies residues 1–19; it reads MRFSVFLPAIAALSSAVAA. N-linked (GlcNAc...) asparagine glycans are attached at residues N49 and N53. H184 is a Zn(2+) binding site. E185 is a catalytic residue. A Zn(2+)-binding site is contributed by H188. Cysteines 223 and 249 form a disulfide. Residues 270–293 are disordered; sequence GSGSGSVTRPRPKPPVLMDYEHRL.

It belongs to the peptidase M43B family.

It localises to the secreted. In terms of biological role, secreted metalloproteinase that allows assimilation of proteinaceous substrates. Plays a pivotal role as a pathogenicity determinant during infections and contributes to the ability of the pathogen to persist within the mammalian host. This is Extracellular metalloprotease MGYG_00389 from Arthroderma gypseum (strain ATCC MYA-4604 / CBS 118893) (Microsporum gypseum).